An 812-amino-acid chain; its full sequence is Axin-2 (812 aa).

The disordered stretch occupies residues 1 to 43 (MNRTLTDPMVSSFREDDPRPPVPGEEGETTCHHPSKLAMMRPK). The 120-residue stretch at 84 to 203 (SLHFLLGDQD…LTSDIYLEYV (120 aa)) folds into the RGS domain. Disordered regions lie at residues 275–326 (SYRR…AIPP), 388–430 (ETMS…TCEE), 446–484 (TPGC…SSMN), and 609–726 (RQTK…SGCH). Residues 285-303 (NRFTSGYSFAPATSANDSE) show a composition bias toward polar residues. Positions 305 to 323 (SSDALTDDSMSMTDSSVDA) are enriched in low complexity. An interaction with GSK3B region spans residues 329-415 (LGSKKQLQRE…RDESEMSSSS (87 aa)). The segment covering 388–397 (ETMSSLEERL) has biased composition (basic and acidic residues). The span at 401-410 (QEEEERDESE) shows a compositional bias: acidic residues. The span at 411–421 (MSSSSASHSLP) shows a compositional bias: low complexity. The interval 415 to 467 (SASHSLPLLPPGTCEEDPQAILDEHLSRVLKTPGCQSPGLLRHSPRSRSPEQR) is interaction with beta-catenin. The span at 475-484 (STRSQSSSMN) shows a compositional bias: polar residues. The span at 672–683 (EEARRRLEEVSK) shows a compositional bias: basic and acidic residues. Residues 730–812 (GSETVVTYFF…KILGKVDRMD (83 aa)) enclose the DIX domain.

Interacts with hwa; leading to promote the tankyrase-mediated degradation of axin1. ADP-ribosylated by tankyrase tnks and tnks2. Poly-ADP-ribosylated protein is recognized by rnf146, followed by ubiquitination and subsequent activation of the Wnt signaling pathway. In terms of processing, ubiquitinated by rnf146 when poly-ADP-ribosylated, leading to its degradation and subsequent activation of the Wnt signaling pathway.

Its subcellular location is the cytoplasm. In terms of biological role, component of the beta-catenin destruction complex required for regulating ctnnb1 levels through phosphorylation and ubiquitination, and modulating Wnt-signaling. Controls dorsoventral patterning by down-regulating ctnnb1 to inhibit the Wnt signaling pathway and ventralize embryos. This chain is Axin-2 (axin2), found in Danio rerio (Zebrafish).